The sequence spans 245 residues: Collagen triple helix repeat-containing protein 1 (245 aa).

The first 32 residues, methionine 1–alanine 32, serve as a signal peptide directing secretion. A Collagen-like domain is found at glutamine 59–lysine 92. The segment at valine 64–glycine 87 is disordered. The N-linked (GlcNAc...) asparagine glycan is linked to asparagine 188.

In terms of processing, N-glycosylated.

The protein localises to the secreted. The protein resides in the extracellular space. It localises to the extracellular matrix. May act as a negative regulator of collagen matrix deposition. This chain is Collagen triple helix repeat-containing protein 1 (Cthrc1), found in Mus musculus (Mouse).